A 797-amino-acid polypeptide reads, in one-letter code: Ent-atiserene synthase KSL1, chloroplastic (797 aa).

Residues 1–48 (LVKDDMSLILSSFSLFRSSRSSPASASLAGSGHPRTTPPKIASLQSPM) constitute a chloroplast transit peptide. Residues 21–32 (SSPASASLAGSG) show a composition bias toward low complexity. A disordered region spans residues 21 to 47 (SSPASASLAGSGHPRTTPPKIASLQSP). Positions 547, 551, 691, and 699 each coordinate Mg(2+). Residues 547–551 (DDLFD) carry the DDXXD motif motif.

It belongs to the terpene synthase family. It depends on Mg(2+) as a cofactor.

The protein resides in the plastid. The protein localises to the chloroplast. The catalysed reaction is ent-copalyl diphosphate = ent-atiserene + diphosphate. It functions in the pathway secondary metabolite biosynthesis; terpenoid biosynthesis. Functionally, involved in the biosynthesis of ent-kaurene diterpenoids natural products such as oridonin, miltiradiene, eriocalyxin B and nezukol, known to exhibit antitumor, anti-inflammatory and antibacterial activities. Catalyzes the conversion of ent-copalyl diphosphate (ent-CPP) to ent-atiserene. This Isodon japonicus (Scutellaria japonica) protein is Ent-atiserene synthase KSL1, chloroplastic.